We begin with the raw amino-acid sequence, 264 residues long: Acetylglutamate kinase (264 aa).

Substrate-binding positions include 40 to 41 (GG), Arg62, and Asn158.

This sequence belongs to the acetylglutamate kinase family. ArgB subfamily.

It localises to the cytoplasm. It catalyses the reaction N-acetyl-L-glutamate + ATP = N-acetyl-L-glutamyl 5-phosphate + ADP. It functions in the pathway amino-acid biosynthesis; L-arginine biosynthesis; N(2)-acetyl-L-ornithine from L-glutamate: step 2/4. Its function is as follows. Catalyzes the ATP-dependent phosphorylation of N-acetyl-L-glutamate. The protein is Acetylglutamate kinase of Cytophaga hutchinsonii (strain ATCC 33406 / DSM 1761 / CIP 103989 / NBRC 15051 / NCIMB 9469 / D465).